We begin with the raw amino-acid sequence, 343 residues long: MVTQIISTMETQASNGPGSVGILNGTNGAADDSKTNLIVNYLPQNMTQEEFKSLFGSIGEIESCKLVRDKITGQSLGYGFVNYVDPNDADKAINTLNGLKLQTKTIKVSYARPSSASIRDANLYVSSLPKTMNQKEMEQLFSQYGRIITSRILVDQVTGSVSRGVGFIRFDKRIEAEEAIKGLNGQKPLGASEPITVKFANNPSQKTGQALLTHLYQTTARRYTGPLHHQTQRFRFSPITIDSVTNLAGVSLTGPTTAGWCIFVYNLSPEADESVLWQLFGPFGAVTNVKVIRDFTTNKCKGFGFVTMTNYDEAAMAIASLNGYRLGDRVLQVSFKTSKQHKA.

RRM domains are found at residues 35 to 113 (TNLI…YARP), 121 to 202 (ANLY…FANN), and 260 to 338 (WCIF…FKTS).

This sequence belongs to the RRM elav family.

Its function is as follows. RNA-binding protein that binds to AU-rich sequences (AREs) of target mRNAs. May also bind poly-A tracts via RRM 3. May be involved in neuronal differentiation and maintenance. The chain is ELAV-like protein 3 from Xenopus tropicalis (Western clawed frog).